The sequence spans 520 residues: Peptide chain release factor 3 (520 aa).

One can recognise a tr-type G domain in the interval Glu8–Thr277. GTP is bound by residues Ser17–Thr24, Asp85–His89, and Asn139–Asp142.

It belongs to the TRAFAC class translation factor GTPase superfamily. Classic translation factor GTPase family. PrfC subfamily.

The protein localises to the cytoplasm. Its function is as follows. Increases the formation of ribosomal termination complexes and stimulates activities of RF-1 and RF-2. It binds guanine nucleotides and has strong preference for UGA stop codons. It may interact directly with the ribosome. The stimulation of RF-1 and RF-2 is significantly reduced by GTP and GDP, but not by GMP. In Staphylococcus aureus (strain JH1), this protein is Peptide chain release factor 3.